Consider the following 1186-residue polypeptide: ATP-dependent helicase/deoxyribonuclease subunit B (1186 aa).

This sequence belongs to the helicase family. AddB/RexB type 2 subfamily. As to quaternary structure, heterodimer of AddA and RexB. It depends on Mg(2+) as a cofactor.

Functionally, the heterodimer acts as both an ATP-dependent DNA helicase and an ATP-dependent, dual-direction single-stranded exonuclease. Recognizes the chi site generating a DNA molecule suitable for the initiation of homologous recombination. This subunit has 5' -&gt; 3' nuclease activity but not helicase activity. The sequence is that of ATP-dependent helicase/deoxyribonuclease subunit B from Latilactobacillus sakei subsp. sakei (strain 23K) (Lactobacillus sakei subsp. sakei).